A 209-amino-acid chain; its full sequence is Small ribosomal subunit protein uS4 (209 aa).

Residues 98-164 (SRLDNVVYRG…TPFIVARETA (67 aa)) enclose the S4 RNA-binding domain.

The protein belongs to the universal ribosomal protein uS4 family. As to quaternary structure, part of the 30S ribosomal subunit. Contacts protein S5. The interaction surface between S4 and S5 is involved in control of translational fidelity.

Functionally, one of the primary rRNA binding proteins, it binds directly to 16S rRNA where it nucleates assembly of the body of the 30S subunit. Its function is as follows. With S5 and S12 plays an important role in translational accuracy. This is Small ribosomal subunit protein uS4 from Frankia casuarinae (strain DSM 45818 / CECT 9043 / HFP020203 / CcI3).